Here is a 211-residue protein sequence, read N- to C-terminus: Large ribosomal subunit protein uL3 (211 aa).

The disordered stretch occupies residues 135–155 (THGNSLSHRAPGSIGQNQSPG). Gln-152 is modified (N5-methylglutamine).

It belongs to the universal ribosomal protein uL3 family. Part of the 50S ribosomal subunit. Forms a cluster with proteins L14 and L19. In terms of processing, methylated by PrmB.

Its function is as follows. One of the primary rRNA binding proteins, it binds directly near the 3'-end of the 23S rRNA, where it nucleates assembly of the 50S subunit. The protein is Large ribosomal subunit protein uL3 of Pseudoalteromonas translucida (strain TAC 125).